The sequence spans 87 residues: UPF0335 protein RL4065 (87 aa).

The protein belongs to the UPF0335 family.

The protein is UPF0335 protein RL4065 of Rhizobium johnstonii (strain DSM 114642 / LMG 32736 / 3841) (Rhizobium leguminosarum bv. viciae).